The primary structure comprises 448 residues: Protein chibby homolog 2 (448 aa).

Serine 41, serine 86, serine 89, serine 97, serine 124, serine 144, serine 148, and serine 150 each carry phosphoserine. Residues alanine 163 to valine 198 are a coiled coil. The disordered stretch occupies residues serine 206–leucine 226. Residues serine 212 and serine 225 each carry the phosphoserine modification. Residues lysine 242 to tyrosine 267 are a coiled coil. The disordered stretch occupies residues glutamine 270–serine 321. Residues glutamate 279 to proline 291 show a composition bias toward basic and acidic residues. A phosphoserine mark is found at serine 335 and serine 338. Residues leucine 356–isoleucine 414 adopt a coiled-coil conformation.

It belongs to the chibby family. SPERT subfamily. As to quaternary structure, homodimer. Binds to NEK1.

In Macaca fascicularis (Crab-eating macaque), this protein is Protein chibby homolog 2 (CBY2).